Consider the following 420-residue polypeptide: Serine hydroxymethyltransferase (420 aa).

Residues Leu-123 and 127–129 (GHL) each bind (6S)-5,6,7,8-tetrahydrofolate. An N6-(pyridoxal phosphate)lysine modification is found at Lys-232. 357–359 (SPF) provides a ligand contact to (6S)-5,6,7,8-tetrahydrofolate.

Belongs to the SHMT family. Homodimer. Pyridoxal 5'-phosphate serves as cofactor.

The protein localises to the cytoplasm. It carries out the reaction (6R)-5,10-methylene-5,6,7,8-tetrahydrofolate + glycine + H2O = (6S)-5,6,7,8-tetrahydrofolate + L-serine. The protein operates within one-carbon metabolism; tetrahydrofolate interconversion. It participates in amino-acid biosynthesis; glycine biosynthesis; glycine from L-serine: step 1/1. Its function is as follows. Catalyzes the reversible interconversion of serine and glycine with tetrahydrofolate (THF) serving as the one-carbon carrier. This reaction serves as the major source of one-carbon groups required for the biosynthesis of purines, thymidylate, methionine, and other important biomolecules. Also exhibits THF-independent aldolase activity toward beta-hydroxyamino acids, producing glycine and aldehydes, via a retro-aldol mechanism. The chain is Serine hydroxymethyltransferase from Streptococcus pyogenes serotype M4 (strain MGAS10750).